Consider the following 242-residue polypeptide: Probable transcriptional regulatory protein LSL_0422 (242 aa).

A disordered region spans residues 1–21; that stretch reads MSGHSKWHNIQGRKNAQDAKR.

Belongs to the TACO1 family.

It localises to the cytoplasm. This Ligilactobacillus salivarius (strain UCC118) (Lactobacillus salivarius) protein is Probable transcriptional regulatory protein LSL_0422.